Here is a 445-residue protein sequence, read N- to C-terminus: Putative aldehyde dehydrogenase AldX (445 aa).

Active-site residues include E214 and C248.

Belongs to the aldehyde dehydrogenase family.

The enzyme catalyses an aldehyde + NAD(+) + H2O = a carboxylate + NADH + 2 H(+). The polypeptide is Putative aldehyde dehydrogenase AldX (aldX) (Bacillus subtilis (strain 168)).